Consider the following 546-residue polypeptide: Probable sucrose-6-phosphate hydrolase (546 aa).

Substrate is bound by residues 105 to 108 (LLND), Gln-124, 167 to 168 (FS), 228 to 229 (RD), and Glu-283. Asp-108 is an active-site residue.

The protein belongs to the glycosyl hydrolase 32 family.

It localises to the cytoplasm. It carries out the reaction Hydrolysis of terminal non-reducing beta-D-fructofuranoside residues in beta-D-fructofuranosides.. It participates in glycan biosynthesis; sucrose metabolism. Enables the bacterium to metabolize sucrose as a sole carbon source. This chain is Probable sucrose-6-phosphate hydrolase, found in Vibrio cholerae.